The following is a 464-amino-acid chain: Arginine biosynthesis bifunctional protein ArgJ, chloroplastic (464 aa).

Substrate-binding residues include Thr208, Lys234, Thr245, Glu332, Asn459, and Thr464. Thr245 (nucleophile) is an active-site residue.

The protein belongs to the ArgJ family. Heterodimer of an alpha and a beta chain.

The protein localises to the plastid. It localises to the chloroplast. The enzyme catalyses N(2)-acetyl-L-ornithine + L-glutamate = N-acetyl-L-glutamate + L-ornithine. It carries out the reaction L-glutamate + acetyl-CoA = N-acetyl-L-glutamate + CoA + H(+). The protein operates within amino-acid biosynthesis; L-arginine biosynthesis; L-ornithine and N-acetyl-L-glutamate from L-glutamate and N(2)-acetyl-L-ornithine (cyclic): step 1/1. Its pathway is amino-acid biosynthesis; L-arginine biosynthesis; N(2)-acetyl-L-ornithine from L-glutamate: step 1/4. In terms of biological role, catalyzes two activities which are involved in the cyclic version of arginine biosynthesis: the synthesis of acetylglutamate from glutamate and acetyl-CoA, and of ornithine by transacetylation between acetylornithine and glutamate. The protein is Arginine biosynthesis bifunctional protein ArgJ, chloroplastic of Zea mays (Maize).